Here is a 477-residue protein sequence, read N- to C-terminus: Asparaginyl-tRNA synthetase (477 aa).

The N-terminal 14 residues, 1-14, are a transit peptide targeting the mitochondrion; it reads MLGARRLLGALRLC. At Lys-353 the chain carries N6-acetyllysine.

This sequence belongs to the class-II aminoacyl-tRNA synthetase family. In terms of assembly, homodimer. As to expression, expressed in brain and inner ear, including the cochlear epithelium and organ of Corti.

It localises to the mitochondrion matrix. The protein localises to the mitochondrion. The enzyme catalyses tRNA(Asn) + L-asparagine + ATP = L-asparaginyl-tRNA(Asn) + AMP + diphosphate + H(+). Mitochondrial aminoacyl-tRNA synthetase that catalyzes the specific attachment of the asparagine amino acid (aa) to the homologous transfer RNA (tRNA), further participating in protein synthesis. The reaction occurs in a two steps: asparagine is first activated by ATP to form Asn-AMP and then transferred to the acceptor end of tRNA(Asn). This chain is Asparaginyl-tRNA synthetase, found in Mus musculus (Mouse).